Consider the following 227-residue polypeptide: Cytochrome c oxidase subunit 2 (227 aa).

Residues 1–14 are Mitochondrial intermembrane-facing; sequence MPYPLQLGFQDATS. Residues 15–45 form a helical membrane-spanning segment; that stretch reads PIMEELLHFHDHTLMIVFLISSLVLYIITLM. Residues 46–59 lie on the Mitochondrial matrix side of the membrane; sequence LTTKLTHTSTMDAQ. The helical transmembrane segment at 60-87 threads the bilayer; the sequence is EVETVWTILPAVILILIALPSLRILYMM. Residues 88–227 lie on the Mitochondrial intermembrane side of the membrane; that stretch reads DEINNPLLTI…HFEDWSTSML (140 aa). The Cu cation site is built by His-161, Cys-196, Glu-198, Cys-200, His-204, and Met-207. Glu-198 contacts Mg(2+).

It belongs to the cytochrome c oxidase subunit 2 family. In terms of assembly, component of the cytochrome c oxidase (complex IV, CIV), a multisubunit enzyme composed of 14 subunits. The complex is composed of a catalytic core of 3 subunits MT-CO1, MT-CO2 and MT-CO3, encoded in the mitochondrial DNA, and 11 supernumerary subunits COX4I, COX5A, COX5B, COX6A, COX6B, COX6C, COX7A, COX7B, COX7C, COX8 and NDUFA4, which are encoded in the nuclear genome. The complex exists as a monomer or a dimer and forms supercomplexes (SCs) in the inner mitochondrial membrane with NADH-ubiquinone oxidoreductase (complex I, CI) and ubiquinol-cytochrome c oxidoreductase (cytochrome b-c1 complex, complex III, CIII), resulting in different assemblies (supercomplex SCI(1)III(2)IV(1) and megacomplex MCI(2)III(2)IV(2)). Found in a complex with TMEM177, COA6, COX18, COX20, SCO1 and SCO2. Interacts with TMEM177 in a COX20-dependent manner. Interacts with COX20. Interacts with COX16. It depends on Cu cation as a cofactor.

It is found in the mitochondrion inner membrane. The enzyme catalyses 4 Fe(II)-[cytochrome c] + O2 + 8 H(+)(in) = 4 Fe(III)-[cytochrome c] + 2 H2O + 4 H(+)(out). In terms of biological role, component of the cytochrome c oxidase, the last enzyme in the mitochondrial electron transport chain which drives oxidative phosphorylation. The respiratory chain contains 3 multisubunit complexes succinate dehydrogenase (complex II, CII), ubiquinol-cytochrome c oxidoreductase (cytochrome b-c1 complex, complex III, CIII) and cytochrome c oxidase (complex IV, CIV), that cooperate to transfer electrons derived from NADH and succinate to molecular oxygen, creating an electrochemical gradient over the inner membrane that drives transmembrane transport and the ATP synthase. Cytochrome c oxidase is the component of the respiratory chain that catalyzes the reduction of oxygen to water. Electrons originating from reduced cytochrome c in the intermembrane space (IMS) are transferred via the dinuclear copper A center (CU(A)) of subunit 2 and heme A of subunit 1 to the active site in subunit 1, a binuclear center (BNC) formed by heme A3 and copper B (CU(B)). The BNC reduces molecular oxygen to 2 water molecules using 4 electrons from cytochrome c in the IMS and 4 protons from the mitochondrial matrix. This Dasypus novemcinctus (Nine-banded armadillo) protein is Cytochrome c oxidase subunit 2 (MT-CO2).